Consider the following 349-residue polypeptide: sn-glycerol-3-phosphate import ATP-binding protein UgpC (349 aa).

Residues 4–235 (ITLKDVHKTY…PATAFVATFI (232 aa)) enclose the ABC transporter domain. 37 to 44 (GPSGCGKS) serves as a coordination point for ATP.

The protein belongs to the ABC transporter superfamily. sn-glycerol-3-phosphate importer (TC 3.A.1.1.3) family. The complex is composed of two ATP-binding proteins (UgpC), two transmembrane proteins (UgpA and UgpE) and a solute-binding protein (UgpB).

Its subcellular location is the cell inner membrane. The enzyme catalyses sn-glycerol 3-phosphate(out) + ATP + H2O = sn-glycerol 3-phosphate(in) + ADP + phosphate + H(+). In terms of biological role, part of the ABC transporter complex UgpBAEC involved in sn-glycerol-3-phosphate (G3P) import. Responsible for energy coupling to the transport system. The polypeptide is sn-glycerol-3-phosphate import ATP-binding protein UgpC (Rhizobium meliloti (strain 1021) (Ensifer meliloti)).